The sequence spans 256 residues: Probable histidine-binding protein (256 aa).

The N-terminal stretch at Met-1–Ala-19 is a signal peptide. Cys-20 carries N-palmitoyl cysteine lipidation. Residue Cys-20 is the site of S-diacylglycerol cysteine attachment.

This sequence belongs to the bacterial solute-binding protein 3 family.

It is found in the cell membrane. Its function is as follows. Involved in histidine transport. The sequence is that of Probable histidine-binding protein (hisJ) from Campylobacter jejuni subsp. jejuni serotype O:2 (strain ATCC 700819 / NCTC 11168).